We begin with the raw amino-acid sequence, 444 residues long: Methylenetetrahydrofolate--tRNA-(uracil-5-)-methyltransferase TrmFO (444 aa).

10-15 is a binding site for FAD; the sequence is GAGLAG.

Belongs to the MnmG family. TrmFO subfamily. Requires FAD as cofactor.

Its subcellular location is the cytoplasm. It catalyses the reaction uridine(54) in tRNA + (6R)-5,10-methylene-5,6,7,8-tetrahydrofolate + NADH + H(+) = 5-methyluridine(54) in tRNA + (6S)-5,6,7,8-tetrahydrofolate + NAD(+). It carries out the reaction uridine(54) in tRNA + (6R)-5,10-methylene-5,6,7,8-tetrahydrofolate + NADPH + H(+) = 5-methyluridine(54) in tRNA + (6S)-5,6,7,8-tetrahydrofolate + NADP(+). Catalyzes the folate-dependent formation of 5-methyl-uridine at position 54 (M-5-U54) in all tRNAs. The sequence is that of Methylenetetrahydrofolate--tRNA-(uracil-5-)-methyltransferase TrmFO from Streptococcus pneumoniae (strain 70585).